The primary structure comprises 287 residues: uncharacterized protein (287 aa).

GTP is bound by residues glycine 43–serine 50, aspartate 90–glycine 93, and aspartate 156–glutamate 159. The G domain occupies glycine 48–isoleucine 140.

The protein to E.coli YkfA and YeeP.

This is an uncharacterized protein from Escherichia coli (strain K12).